A 203-amino-acid chain; its full sequence is UPF0637 protein Sca_0732 (203 aa).

This sequence belongs to the UPF0637 family.

The chain is UPF0637 protein Sca_0732 from Staphylococcus carnosus (strain TM300).